The chain runs to 189 residues: GMP synthase [glutamine-hydrolyzing] subunit A (189 aa).

One can recognise a Glutamine amidotransferase type-1 domain in the interval 1-189; the sequence is MIVILNNGGQ…CKKCGFGFEE (189 aa). Catalysis depends on cysteine 76, which acts as the Nucleophile. Residues histidine 163 and glutamate 165 contribute to the active site.

Heterodimer composed of a glutamine amidotransferase subunit (A) and a GMP-binding subunit (B).

The catalysed reaction is XMP + L-glutamine + ATP + H2O = GMP + L-glutamate + AMP + diphosphate + 2 H(+). It functions in the pathway purine metabolism; GMP biosynthesis; GMP from XMP (L-Gln route): step 1/1. In terms of biological role, catalyzes the synthesis of GMP from XMP. This is GMP synthase [glutamine-hydrolyzing] subunit A from Methanococcus maripaludis (strain DSM 14266 / JCM 13030 / NBRC 101832 / S2 / LL).